The chain runs to 554 residues: ATP synthase subunit alpha (554 aa).

Residue 172–179 coordinates ATP; the sequence is GDRKTGKT. The segment at 528–554 is disordered; sequence LDEEELEKESVKVKKPAPEKKAKKEQK. The span at 535-554 shows a compositional bias: basic and acidic residues; it reads KESVKVKKPAPEKKAKKEQK.

The protein belongs to the ATPase alpha/beta chains family. In terms of assembly, F-type ATPases have 2 components, CF(1) - the catalytic core - and CF(0) - the membrane proton channel. CF(1) has five subunits: alpha(3), beta(3), gamma(1), delta(1), epsilon(1). CF(0) has three main subunits: a(1), b(2) and c(9-12). The alpha and beta chains form an alternating ring which encloses part of the gamma chain. CF(1) is attached to CF(0) by a central stalk formed by the gamma and epsilon chains, while a peripheral stalk is formed by the delta and b chains.

It localises to the cell membrane. It catalyses the reaction ATP + H2O + 4 H(+)(in) = ADP + phosphate + 5 H(+)(out). Produces ATP from ADP in the presence of a proton gradient across the membrane. The alpha chain is a regulatory subunit. In Mycolicibacterium paratuberculosis (strain ATCC BAA-968 / K-10) (Mycobacterium paratuberculosis), this protein is ATP synthase subunit alpha.